The following is a 147-amino-acid chain: uncharacterized protein (147 aa).

Transmembrane regions (helical) follow at residues 35 to 55 (TIQLAGWISVLFMLGYNFGNH) and 62 to 82 (IWLLVITALLVIGLLIHLFEP).

As to quaternary structure, has been detected in a cytochrome bc1-aa3 supercomplex; its deletion however leaves complex activity unaffected.

The protein localises to the cell membrane. This is an uncharacterized protein from Corynebacterium glutamicum (strain ATCC 13032 / DSM 20300 / JCM 1318 / BCRC 11384 / CCUG 27702 / LMG 3730 / NBRC 12168 / NCIMB 10025 / NRRL B-2784 / 534).